A 561-amino-acid chain; its full sequence is MDFFKKEILDWSIYLFLHYITRLCSNSSNSSTSHIIQEYNLVRKYEKVDKTIVDFLSRWPNLFHILEYGENILHIYFIDAANTNIMIFFLDRVLNINKNRGSFIHNLGLSSINIKEYVYQLVNNDHLDNSIRLMLENGRRTRHFLSYILDTVNIYISILINHRFYIDAEDSYGCTLLHRCIYNYKKSESESYNELIKILLNNGSDVDKKDTYGNTPFILLCKHDIDNAELFEICLENANIDSVDFNGYTPLHYVSCRNKYDFVKLLISKGANVNARNRFGTTPFYCGIIHGISLIKLYLESDTELEIDNEHIVRHLIIFDAVESLDYLLSRGVIDINYRTIYNETSIYDAVSYNAYNTLVYLLNRNGDFETITTSGCTCISEAVANNNKIIMDILLSKRPSLKIMIPSMIAITKHKQHNADLLKMCIKYTACMTDYDTLIDVQSLHQYKWYILKCFDEIDIMKRCYIKNKTVFQLVFCIKDINTLMRYGRHPSFVKCNILDVYGSCVRNIIASIRYRQRLISLLSKKLDAGDKWSCFPNEIKYKILENFNDNELTTYLKIL.

ANK repeat units lie at residues 68–98, 172–208, 212–242, 246–275, 279–307, 342–371, and 375–404; these read YGEN…NINK, YGCT…DVDK, YGNT…NIDS, NGYT…NVNA, FGTT…ELEI, YNET…DFET, and SGCT…SLKI.

It belongs to the orthopoxvirus OPG189 protein family.

Its function is as follows. Contributes to viral release without involving rearrangement of host actin. The protein is Ankyrin repeat protein OPG189 (OPG189) of Cynomys gunnisoni (Gunnison's prairie dog).